The sequence spans 92 residues: Sec-independent protein translocase protein TatA (92 aa).

Residues 1 to 21 traverse the membrane as a helical segment; that stretch reads MGIFDWKHWIVILVVVVLVFG. Residues 43–92 are disordered; that stretch reads MNDDEKPADPTVTPAQPVPPVQPQATAQANPPHTIDVQAQKVEEPIRKDV. The segment covering 65 to 74 has biased composition (low complexity); sequence PQATAQANPP. Basic and acidic residues predominate over residues 83-92; the sequence is KVEEPIRKDV.

It belongs to the TatA/E family. As to quaternary structure, the Tat system comprises two distinct complexes: a TatABC complex, containing multiple copies of TatA, TatB and TatC subunits, and a separate TatA complex, containing only TatA subunits. Substrates initially bind to the TatABC complex, which probably triggers association of the separate TatA complex to form the active translocon.

It localises to the cell inner membrane. Its function is as follows. Part of the twin-arginine translocation (Tat) system that transports large folded proteins containing a characteristic twin-arginine motif in their signal peptide across membranes. TatA could form the protein-conducting channel of the Tat system. The polypeptide is Sec-independent protein translocase protein TatA (Pseudomonas fluorescens (strain Pf0-1)).